We begin with the raw amino-acid sequence, 300 residues long: tRNA dimethylallyltransferase (300 aa).

9–16 (GPTASGKS) lines the ATP pocket. Substrate is bound at residue 11-16 (TASGKS). The interval 34 to 37 (DSKQ) is interaction with substrate tRNA.

It belongs to the IPP transferase family. As to quaternary structure, monomer. Mg(2+) serves as cofactor.

The catalysed reaction is adenosine(37) in tRNA + dimethylallyl diphosphate = N(6)-dimethylallyladenosine(37) in tRNA + diphosphate. Catalyzes the transfer of a dimethylallyl group onto the adenine at position 37 in tRNAs that read codons beginning with uridine, leading to the formation of N6-(dimethylallyl)adenosine (i(6)A). The polypeptide is tRNA dimethylallyltransferase (Ehrlichia ruminantium (strain Welgevonden)).